Reading from the N-terminus, the 301-residue chain is Glycine--tRNA ligase alpha subunit (301 aa).

This sequence belongs to the class-II aminoacyl-tRNA synthetase family. In terms of assembly, tetramer of two alpha and two beta subunits.

The protein resides in the cytoplasm. The catalysed reaction is tRNA(Gly) + glycine + ATP = glycyl-tRNA(Gly) + AMP + diphosphate. The sequence is that of Glycine--tRNA ligase alpha subunit from Pseudoalteromonas atlantica (strain T6c / ATCC BAA-1087).